A 122-amino-acid polypeptide reads, in one-letter code: Large ribosomal subunit protein uL14 (122 aa).

The protein belongs to the universal ribosomal protein uL14 family. In terms of assembly, part of the 50S ribosomal subunit. Forms a cluster with proteins L3 and L19. In the 70S ribosome, L14 and L19 interact and together make contacts with the 16S rRNA in bridges B5 and B8.

Its function is as follows. Binds to 23S rRNA. Forms part of two intersubunit bridges in the 70S ribosome. The sequence is that of Large ribosomal subunit protein uL14 from Pelodictyon phaeoclathratiforme (strain DSM 5477 / BU-1).